The primary structure comprises 549 residues: Carboxylesterase 1C (549 aa).

An N-terminal signal peptide occupies residues M1–G18. The N-linked (GlcNAc...) asparagine glycan is linked to N79. A disulfide bridge connects residues C87 and C116. The active-site Acyl-ester intermediate is S221. C273 and C284 are oxidised to a cystine. 3 N-linked (GlcNAc...) asparagine glycosylation sites follow: N274, N275, and N302. E340 serves as the catalytic Charge relay system. N375 is a glycosylation site (N-linked (GlcNAc...) asparagine). Catalysis depends on H453, which acts as the Charge relay system. S471 carries the phosphoserine modification. A glycan (N-linked (GlcNAc...) asparagine) is linked at N476. A Prevents secretion from ER motif is present at residues T546–T549.

Belongs to the type-B carboxylesterase/lipase family.

The protein resides in the endoplasmic reticulum lumen. The catalysed reaction is a carboxylic ester + H2O = an alcohol + a carboxylate + H(+). Functionally, involved in the detoxification of xenobiotics and in the activation of ester and amide prodrugs. Involved in the extracellular metabolism of lung surfactant. This is Carboxylesterase 1C (Ces1c) from Rattus norvegicus (Rat).